A 285-amino-acid polypeptide reads, in one-letter code: Bifunctional protein FolD (285 aa).

Residues 165-167 (GAS) and isoleucine 232 each bind NADP(+).

It belongs to the tetrahydrofolate dehydrogenase/cyclohydrolase family. Homodimer.

The catalysed reaction is (6R)-5,10-methylene-5,6,7,8-tetrahydrofolate + NADP(+) = (6R)-5,10-methenyltetrahydrofolate + NADPH. It catalyses the reaction (6R)-5,10-methenyltetrahydrofolate + H2O = (6R)-10-formyltetrahydrofolate + H(+). The protein operates within one-carbon metabolism; tetrahydrofolate interconversion. Catalyzes the oxidation of 5,10-methylenetetrahydrofolate to 5,10-methenyltetrahydrofolate and then the hydrolysis of 5,10-methenyltetrahydrofolate to 10-formyltetrahydrofolate. This chain is Bifunctional protein FolD, found in Sulfurihydrogenibium sp. (strain YO3AOP1).